We begin with the raw amino-acid sequence, 302 residues long: Sulfate adenylyltransferase subunit 2 (302 aa).

This sequence belongs to the PAPS reductase family. CysD subfamily. Heterodimer composed of CysD, the smaller subunit, and CysN.

It carries out the reaction sulfate + ATP + H(+) = adenosine 5'-phosphosulfate + diphosphate. It participates in sulfur metabolism; hydrogen sulfide biosynthesis; sulfite from sulfate: step 1/3. Its function is as follows. With CysN forms the ATP sulfurylase (ATPS) that catalyzes the adenylation of sulfate producing adenosine 5'-phosphosulfate (APS) and diphosphate, the first enzymatic step in sulfur assimilation pathway. APS synthesis involves the formation of a high-energy phosphoric-sulfuric acid anhydride bond driven by GTP hydrolysis by CysN coupled to ATP hydrolysis by CysD. This is Sulfate adenylyltransferase subunit 2 from Enterobacter sp. (strain 638).